The following is a 278-amino-acid chain: Small ribosomal subunit protein uS2 (278 aa).

At serine 2 the chain carries N-acetylserine. Positions 258 to 278 are disordered; it reads TNEGKTAADEWATGAQTQSNW.

Belongs to the universal ribosomal protein uS2 family. Component of the small ribosomal subunit. Mature ribosomes consist of a small (40S) and a large (60S) subunit. The 40S subunit contains about 33 different proteins and 1 molecule of RNA (18S). The 60S subunit contains about 49 different proteins and 3 molecules of RNA (28S, 5.8S and 5S). Interacts with rps-21.

It localises to the cytoplasm. In terms of biological role, required for the assembly and/or stability of the 40S ribosomal subunit. Required for the processing of the 20S rRNA-precursor to mature 18S rRNA in a late step of the maturation of 40S ribosomal subunits. The sequence is that of Small ribosomal subunit protein uS2 from Caenorhabditis briggsae.